The primary structure comprises 620 residues: Glutathione-regulated potassium-efflux system protein KefC (620 aa).

12 helical membrane passes run 4-24 (HTLI…PIAV), 26-46 (LGLG…PWGL), 54-74 (SILH…GLEL), 90-110 (GALQ…LLGL), 114-134 (VAEL…MQAM), 149-169 (FAVL…IPLL), 178-198 (MGAF…VVLL), 218-238 (VFSA…EEVG), 270-290 (GLLL…GTLL), 294-314 (LRIV…LWLI), 327-347 (WFAV…GAAQ), and 359-379 (SLTL…VILN). The RCK N-terminal domain occupies 399-518 (QPRVIIAGFG…AGVEKPERET (120 aa)). The disordered stretch occupies residues 597 to 620 (GWQGTEEGKHTGNMADEPETKPSS).

It belongs to the monovalent cation:proton antiporter 2 (CPA2) transporter (TC 2.A.37) family. KefC subfamily. In terms of assembly, homodimer. Interacts with the regulatory subunit KefF.

Its subcellular location is the cell inner membrane. Pore-forming subunit of a potassium efflux system that confers protection against electrophiles. Catalyzes K(+)/H(+) antiport. The protein is Glutathione-regulated potassium-efflux system protein KefC of Escherichia coli O7:K1 (strain IAI39 / ExPEC).